The chain runs to 162 residues: NADH-quinone oxidoreductase subunit I (162 aa).

4Fe-4S ferredoxin-type domains are found at residues 53–83 and 93–122; these read LRRY…IDSA and TRYD…ETHI. Cys-63, Cys-66, Cys-69, Cys-73, Cys-102, Cys-105, Cys-108, and Cys-112 together coordinate [4Fe-4S] cluster.

This sequence belongs to the complex I 23 kDa subunit family. As to quaternary structure, NDH-1 is composed of 14 different subunits. Subunits NuoA, H, J, K, L, M, N constitute the membrane sector of the complex. It depends on [4Fe-4S] cluster as a cofactor.

It localises to the cell inner membrane. The catalysed reaction is a quinone + NADH + 5 H(+)(in) = a quinol + NAD(+) + 4 H(+)(out). In terms of biological role, NDH-1 shuttles electrons from NADH, via FMN and iron-sulfur (Fe-S) centers, to quinones in the respiratory chain. The immediate electron acceptor for the enzyme in this species is believed to be ubiquinone. Couples the redox reaction to proton translocation (for every two electrons transferred, four hydrogen ions are translocated across the cytoplasmic membrane), and thus conserves the redox energy in a proton gradient. In Xanthomonas oryzae pv. oryzae (strain MAFF 311018), this protein is NADH-quinone oxidoreductase subunit I.